A 93-amino-acid polypeptide reads, in one-letter code: uncharacterized protein (93 aa).

The chain crosses the membrane as a helical span at residues 68–88; it reads WLVTVVLANGVVSLFLLGGLI.

Its subcellular location is the membrane. This is an uncharacterized protein from Mycoplasma pneumoniae (strain ATCC 29342 / M129 / Subtype 1) (Mycoplasmoides pneumoniae).